Here is a 377-residue protein sequence, read N- to C-terminus: Lipoyl synthase, mitochondrial (377 aa).

Positions 103, 108, 114, 134, 138, 141, and 349 each coordinate [4Fe-4S] cluster. The Radical SAM core domain occupies 119 to 338 (EHGTQTATIM…EERGNELGFL (220 aa)).

The protein belongs to the radical SAM superfamily. Lipoyl synthase family. Requires [4Fe-4S] cluster as cofactor.

It localises to the mitochondrion. The catalysed reaction is [[Fe-S] cluster scaffold protein carrying a second [4Fe-4S](2+) cluster] + N(6)-octanoyl-L-lysyl-[protein] + 2 oxidized [2Fe-2S]-[ferredoxin] + 2 S-adenosyl-L-methionine + 4 H(+) = [[Fe-S] cluster scaffold protein] + N(6)-[(R)-dihydrolipoyl]-L-lysyl-[protein] + 4 Fe(3+) + 2 hydrogen sulfide + 2 5'-deoxyadenosine + 2 L-methionine + 2 reduced [2Fe-2S]-[ferredoxin]. It functions in the pathway protein modification; protein lipoylation via endogenous pathway; protein N(6)-(lipoyl)lysine from octanoyl-[acyl-carrier-protein]: step 2/2. Functionally, catalyzes the radical-mediated insertion of two sulfur atoms into the C-6 and C-8 positions of the octanoyl moiety bound to the lipoyl domains of lipoate-dependent enzymes, thereby converting the octanoylated domains into lipoylated derivatives. The sequence is that of Lipoyl synthase, mitochondrial from Drosophila melanogaster (Fruit fly).